A 573-amino-acid polypeptide reads, in one-letter code: Putative cytochrome c oxidase subunit 1-beta (573 aa).

The chain crosses the membrane as a helical span at residues 53-73; it reads VIGHLYLATSFGFFLLGGVLA. Histidine 100 provides a ligand contact to Fe(II)-heme a. A run of 6 helical transmembrane segments spans residues 103–123, 141–161, 188–208, 227–247, 272–292, and 304–324; these read IMML…IMPL, WMYL…GGAA, GLVV…STII, ILFT…ALLM, LFWF…FGIV, and IFGY…SAVV. Histidine 278 and tyrosine 282 together coordinate Cu cation. Positions 278-282 form a cross-link, 1'-histidyl-3'-tyrosine (His-Tyr); it reads HPEVY. Cu cation-binding residues include histidine 327 and histidine 328. Transmembrane regions (helical) follow at residues 329–349 and 373–393; these read MFAT…LIAV and MLWA…GVLI. Histidine 411 serves as a coordination point for heme a3. 3 helical membrane passes run 412–432, 447–467, and 490–510; these read LHYV…YFWW, IHFW…HWLG, and ISSI…YNVW. Histidine 413 contributes to the Fe(II)-heme a binding site.

This sequence belongs to the heme-copper respiratory oxidase family. Associates with subunits II, III and IV to form cytochrome c oxidase. Requires Cu(2+) as cofactor. It depends on heme as a cofactor.

It is found in the cell membrane. It catalyses the reaction 4 Fe(II)-[cytochrome c] + O2 + 8 H(+)(in) = 4 Fe(III)-[cytochrome c] + 2 H2O + 4 H(+)(out). It functions in the pathway energy metabolism; oxidative phosphorylation. Functionally, cytochrome c oxidase is the component of the respiratory chain that catalyzes the reduction of oxygen to water. Subunits 1-3 form the functional core of the enzyme complex. CO I is the catalytic subunit of the enzyme. Electrons originating in cytochrome c are transferred via the copper A center of subunit 2 and heme A of subunit 1 to the bimetallic center formed by heme A3 and copper B. This chain is Putative cytochrome c oxidase subunit 1-beta (ctaD2), found in Streptomyces coelicolor (strain ATCC BAA-471 / A3(2) / M145).